The sequence spans 187 residues: U8 snoRNA-decapping enzyme (187 aa).

The 145-residue stretch at 43 to 187 (NSSQASHCMI…GFPTFLTTPS (145 aa)) folds into the Nudix hydrolase domain. Phenylalanine 82 serves as a coordination point for substrate. Residues glycine 84, glutamate 100, glutamate 104, and glutamate 160 each contribute to the Mn(2+) site. A Nudix box motif is present at residues 85–106 (GLVDAGEDSIKALNRELTEEMN).

The protein belongs to the Nudix hydrolase family. NUDT16 subfamily. Homodimer. The cofactor is Mg(2+). Mn(2+) is required as a cofactor. Co(2+) serves as cofactor.

It localises to the nucleus. The protein resides in the nucleolus. The protein localises to the nucleoplasm. It is found in the cytoplasm. The catalysed reaction is a 5'-end (N(7)-methyl 5'-triphosphoguanosine)-ribonucleoside in mRNA + H2O = N(7)-methyl-GDP + a 5'-end phospho-ribonucleoside in mRNA + 2 H(+). It carries out the reaction IDP + H2O = IMP + phosphate + H(+). It catalyses the reaction dIDP + H2O = dIMP + phosphate + H(+). Its function is as follows. RNA-binding and decapping enzyme that catalyzes the cleavage of the cap structure of snoRNAs in a metal-dependent manner. Has diphosphatase activity and removes m7G caps from U8 snoRNA. May catalyze the cleavage of the cap structure on mRNAs. May also act as a phosphatase; hydrolyzes the non-canonical purine nucleotides inosine diphosphate (IDP) and deoxyinosine diphosphate (dITP). May bind to the U8 snoRNA. The protein is U8 snoRNA-decapping enzyme (NUDT16) of Homalodisca vitripennis (Glassy-winged sharpshooter).